The following is a 455-amino-acid chain: Zinc finger protein ZPR1 homolog (455 aa).

2 C4-type zinc fingers span residues 28-60 (CPVC…CPHC) and 247-279 (CPNC…CDRC).

It belongs to the ZPR1 family.

It is found in the nucleus. The sequence is that of Zinc finger protein ZPR1 homolog from Caenorhabditis elegans.